Consider the following 502-residue polypeptide: Glycerol kinase (502 aa).

Thr16 is a binding site for ADP. Thr16, Thr17, and Ser18 together coordinate ATP. Thr16 contacts sn-glycerol 3-phosphate. An ADP-binding site is contributed by Arg20. Positions 86, 87, 138, and 247 each coordinate sn-glycerol 3-phosphate. Glycerol-binding residues include Arg86, Glu87, Tyr138, Asp247, and Gln248. ADP is bound by residues Thr269 and Gly312. Positions 269, 312, 316, and 413 each coordinate ATP. ADP-binding residues include Gly413 and Asn417.

The protein belongs to the FGGY kinase family.

It catalyses the reaction glycerol + ATP = sn-glycerol 3-phosphate + ADP + H(+). Its pathway is polyol metabolism; glycerol degradation via glycerol kinase pathway; sn-glycerol 3-phosphate from glycerol: step 1/1. Inhibited by fructose 1,6-bisphosphate (FBP). Its function is as follows. Key enzyme in the regulation of glycerol uptake and metabolism. Catalyzes the phosphorylation of glycerol to yield sn-glycerol 3-phosphate. This Dechloromonas aromatica (strain RCB) protein is Glycerol kinase.